The chain runs to 337 residues: Mitochondrial glutathione transporter SLC25A40 (337 aa).

Solcar repeat units follow at residues 14-132 (VTPL…LSAF), 140-224 (NETR…LKRW), and 234-328 (PTFM…GKSF). Helical transmembrane passes span 20–40 (MIAS…LDVV), 104–124 (LWSG…IYFT), 146–166 (IVAG…LELI), 200–221 (WAPT…YENL), 240–260 (FTSG…FDVV), and 299–319 (GLFT…AIMI).

Belongs to the mitochondrial carrier (TC 2.A.29) family.

It is found in the mitochondrion inner membrane. The enzyme catalyses glutathione(in) = glutathione(out). In terms of biological role, probable mitochondrial transporter required for glutathione import into mitochondria. Glutathione, which plays key roles in oxidative metabolism, is produced exclusively in the cytosol and is imported in many organelles. Mitochondrial glutathione is required for the activity and stability of proteins containing iron-sulfur clusters, as well as erythropoiesis. This chain is Mitochondrial glutathione transporter SLC25A40, found in Mus musculus (Mouse).